We begin with the raw amino-acid sequence, 91 residues long: Elongation factor 1-beta (91 aa).

The protein belongs to the EF-1-beta/EF-1-delta family.

Promotes the exchange of GDP for GTP in EF-1-alpha/GDP, thus allowing the regeneration of EF-1-alpha/GTP that could then be used to form the ternary complex EF-1-alpha/GTP/AAtRNA. The protein is Elongation factor 1-beta of Thermococcus kodakarensis (strain ATCC BAA-918 / JCM 12380 / KOD1) (Pyrococcus kodakaraensis (strain KOD1)).